A 148-amino-acid polypeptide reads, in one-letter code: UPF0179 protein Mpal_0949 (148 aa).

It belongs to the UPF0179 family.

The polypeptide is UPF0179 protein Mpal_0949 (Methanosphaerula palustris (strain ATCC BAA-1556 / DSM 19958 / E1-9c)).